Here is a 122-residue protein sequence, read N- to C-terminus: Small ribosomal subunit protein uS13 (122 aa).

The segment at 93–122 is disordered; sequence RRGLPVRGQNTKTNARTRKGPKRTAGGKKK. Positions 107–122 are enriched in basic residues; that stretch reads ARTRKGPKRTAGGKKK.

The protein belongs to the universal ribosomal protein uS13 family. In terms of assembly, part of the 30S ribosomal subunit. Forms a loose heterodimer with protein S19. Forms two bridges to the 50S subunit in the 70S ribosome.

Its function is as follows. Located at the top of the head of the 30S subunit, it contacts several helices of the 16S rRNA. In the 70S ribosome it contacts the 23S rRNA (bridge B1a) and protein L5 of the 50S subunit (bridge B1b), connecting the 2 subunits; these bridges are implicated in subunit movement. Contacts the tRNAs in the A and P-sites. This is Small ribosomal subunit protein uS13 from Syntrophomonas wolfei subsp. wolfei (strain DSM 2245B / Goettingen).